Reading from the N-terminus, the 502-residue chain is Cardiolipin synthase (502 aa).

3 helical membrane passes run 7 to 27, 29 to 49, and 59 to 79; these read VIIFVLAVAAFLFLTNDYWEG, LLGGLSILISCSVVFIAFVIS, and ITWLVVLGSFPLIGFFFYLMF. PLD phosphodiesterase domains lie at 237 to 264 and 415 to 442; these read INFRNHRKIIVIDGTIGFVGGLNIGDEY and SKGFLHSKIMIVDGELASIGTANMDMRS. Catalysis depends on residues His242, Lys244, Asp249, His420, Lys422, and Asp427.

The protein belongs to the phospholipase D family. Cardiolipin synthase subfamily.

Its subcellular location is the cell membrane. It catalyses the reaction 2 a 1,2-diacyl-sn-glycero-3-phospho-(1'-sn-glycerol) = a cardiolipin + glycerol. In terms of biological role, catalyzes the reversible phosphatidyl group transfer from one phosphatidylglycerol molecule to another to form cardiolipin (CL) (diphosphatidylglycerol) and glycerol. This Geobacillus sp. (strain WCH70) protein is Cardiolipin synthase (cls).